The following is a 226-amino-acid chain: Orotidine 5'-phosphate decarboxylase (226 aa).

Substrate contacts are provided by residues Asp-8, Lys-30, 58–67 (DLKIHDIPNT), Thr-117, Arg-177, Gln-186, Gly-206, and Arg-207. Lys-60 functions as the Proton donor in the catalytic mechanism.

Belongs to the OMP decarboxylase family. Type 1 subfamily. As to quaternary structure, homodimer.

It catalyses the reaction orotidine 5'-phosphate + H(+) = UMP + CO2. It participates in pyrimidine metabolism; UMP biosynthesis via de novo pathway; UMP from orotate: step 2/2. Its function is as follows. Catalyzes the decarboxylation of orotidine 5'-monophosphate (OMP) to uridine 5'-monophosphate (UMP). In Campylobacter jejuni subsp. doylei (strain ATCC BAA-1458 / RM4099 / 269.97), this protein is Orotidine 5'-phosphate decarboxylase.